The following is a 365-amino-acid chain: Probable flavin mononucleotide-dependent alkene reductase (365 aa).

Residues 30–32, Ala-63, and Gln-105 contribute to the FMN site; that span reads PLT. Tyr-191 acts as the Proton donor in catalysis. FMN-binding positions include Arg-238, Ser-303, and 324-325; that span reads GT.

Belongs to the NADH:flavin oxidoreductase/NADH oxidase family. In terms of assembly, monomer. It depends on FMN as a cofactor.

The protein localises to the cytoplasm. The protein resides in the cytosol. In terms of biological role, may function as a flavin mononucleotide (FMN)-dependent alkene reductase on substrates carrying alpha,beta-unsaturated carbonyl groups (ketones, aldehydes, carboxylic acids, esters, lactones or cyclic imides). The catalysis depends on NAD(P)H, which acts as a hydride donor for the reduction. Seems to be involved in metabolic pathways required for efficient replication of amastigotes within macrophages. Acts as a FMN-dependent nitroreductase that activates anti-leishmanial bicyclic nitroaromatic prodrugs including delamanid, DNDI-VL-2098 and (R)-PA-824, forming toxic products that kill the parasites. The protein is Probable flavin mononucleotide-dependent alkene reductase of Leishmania infantum.